We begin with the raw amino-acid sequence, 100 residues long: Large ribosomal subunit protein uL23 (100 aa).

Belongs to the universal ribosomal protein uL23 family. As to quaternary structure, part of the 50S ribosomal subunit. Contacts protein L29, and trigger factor when it is bound to the ribosome.

In terms of biological role, one of the early assembly proteins it binds 23S rRNA. One of the proteins that surrounds the polypeptide exit tunnel on the outside of the ribosome. Forms the main docking site for trigger factor binding to the ribosome. The chain is Large ribosomal subunit protein uL23 from Synechococcus sp. (strain RCC307).